The following is a 181-amino-acid chain: CASP-like protein UU-1 (181 aa).

The Cytoplasmic segment spans residues 1-30 (MTMELESQEVVVETTTAAAAARAASAAHVR). Residues 31–51 (TTVALRLLAFAASLAAAVVVA) traverse the membrane as a helical segment. Topologically, residues 52–65 (TNRQERWGITVTFK) are extracellular. Residues 66–86 (MFAVWEAFVAINFACAAYALL) form a helical membrane-spanning segment. Topologically, residues 87 to 107 (TAVFVKKLVSKHWLHHMDQFT) are cytoplasmic. Residues 108-128 (VNLQAASTAGAGAVGSVAMWG) traverse the membrane as a helical segment. Residues 129–147 (NEPSGWYAVCRLYRLYCDR) are Extracellular-facing. The chain crosses the membrane as a helical span at residues 148 to 168 (GAVSLALAFVAFVAFGVASSL). Residues 169-181 (SRYPRAPPPPAPR) are Cytoplasmic-facing.

Belongs to the Casparian strip membrane proteins (CASP) family. As to quaternary structure, homodimer and heterodimers.

The protein localises to the cell membrane. The protein is CASP-like protein UU-1 of Sorghum bicolor (Sorghum).